The primary structure comprises 623 residues: Chaperone protein DnaK (623 aa).

T197 carries the phosphothreonine; by autocatalysis modification. The tract at residues 600-623 (KKDENAGANGGNKKDDDVIDAEVE) is disordered.

The protein belongs to the heat shock protein 70 family.

Acts as a chaperone. This chain is Chaperone protein DnaK, found in Campylobacter concisus (strain 13826).